The following is a 550-amino-acid chain: Dihydroxy-acid dehydratase (550 aa).

Asp-78 provides a ligand contact to Mg(2+). [2Fe-2S] cluster is bound at residue Cys-119. Residues Asp-120 and Lys-121 each coordinate Mg(2+). The residue at position 121 (Lys-121) is an N6-carboxylysine. Cys-191 serves as a coordination point for [2Fe-2S] cluster. A Mg(2+)-binding site is contributed by Glu-440. Ser-466 (proton acceptor) is an active-site residue.

It belongs to the IlvD/Edd family. As to quaternary structure, homodimer. [2Fe-2S] cluster is required as a cofactor. The cofactor is Mg(2+).

The enzyme catalyses (2R)-2,3-dihydroxy-3-methylbutanoate = 3-methyl-2-oxobutanoate + H2O. It catalyses the reaction (2R,3R)-2,3-dihydroxy-3-methylpentanoate = (S)-3-methyl-2-oxopentanoate + H2O. It functions in the pathway amino-acid biosynthesis; L-isoleucine biosynthesis; L-isoleucine from 2-oxobutanoate: step 3/4. The protein operates within amino-acid biosynthesis; L-valine biosynthesis; L-valine from pyruvate: step 3/4. Functions in the biosynthesis of branched-chain amino acids. Catalyzes the dehydration of (2R,3R)-2,3-dihydroxy-3-methylpentanoate (2,3-dihydroxy-3-methylvalerate) into 2-oxo-3-methylpentanoate (2-oxo-3-methylvalerate) and of (2R)-2,3-dihydroxy-3-methylbutanoate (2,3-dihydroxyisovalerate) into 2-oxo-3-methylbutanoate (2-oxoisovalerate), the penultimate precursor to L-isoleucine and L-valine, respectively. In Methanococcus maripaludis (strain C7 / ATCC BAA-1331), this protein is Dihydroxy-acid dehydratase.